A 174-amino-acid polypeptide reads, in one-letter code: MNRTEKEQVISELHEKMAKAKAAIVAEPKGLNVAVVTDLRKKLRDAKIDYRIVKNTLAARAAKGTPVEPVADRFVGPTALVMSYDDVVTPAKLLADFMKDRENFVIRTAIIEGKVIDAKGVQALAKMPGLKELRGQIAAMIAQPATKLARLVGTPGQQLARVVGARREQLEKQA.

It belongs to the universal ribosomal protein uL10 family. As to quaternary structure, part of the ribosomal stalk of the 50S ribosomal subunit. The N-terminus interacts with L11 and the large rRNA to form the base of the stalk. The C-terminus forms an elongated spine to which L12 dimers bind in a sequential fashion forming a multimeric L10(L12)X complex.

Its function is as follows. Forms part of the ribosomal stalk, playing a central role in the interaction of the ribosome with GTP-bound translation factors. The chain is Large ribosomal subunit protein uL10 from Anaeromyxobacter dehalogenans (strain 2CP-1 / ATCC BAA-258).